Here is a 488-residue protein sequence, read N- to C-terminus: MTKTERYLQLRSMIPEMRRIKRIHFVGIGGAGMGGIAEVLVNEGYVVSGSDIAQNAVTDRLCLLGAKIHIGHGADNVQQADVVVVSTAINPENPEIIAAKELRIPIVRRAEMLAELMRYRHGVAIAGTHGKTTTTSLIASLYGQAGRDPTFVIGGLLNSAGTNARLGTSRYLIAEADESDASFLHLQPMVSVVTNIEADHMDTYGGDFEKLKSTFVDFLHNLPFYGVAVVCIDDAVVREIMPRIGRHMITYGFSDDADVQALNFHQQGHQCRFTVRRKGKEDLDLLLNLPGQHNVLNALAAIAVATEDEIDDSAIIQALAEFQGIGRRFQHLGKFATPKGEVMLVDDYGHHPSEVAATIKAARAGWPDKRLVMAYQPHRYTRTRDLYEDFIEVLSQVDCLLLLEVYSAGEAPIPGADGRALCRSIRLRGQLDPIFIASPDQLAEVLPDVLQEGDLLLTQGAGNIGALSRQLAASELGFSIAATTEVKP.

Residue 127-133 (GTHGKTT) participates in ATP binding.

Belongs to the MurCDEF family.

It is found in the cytoplasm. The enzyme catalyses UDP-N-acetyl-alpha-D-muramate + L-alanine + ATP = UDP-N-acetyl-alpha-D-muramoyl-L-alanine + ADP + phosphate + H(+). The protein operates within cell wall biogenesis; peptidoglycan biosynthesis. In terms of biological role, cell wall formation. The chain is UDP-N-acetylmuramate--L-alanine ligase from Shewanella sp. (strain ANA-3).